Reading from the N-terminus, the 942-residue chain is VPS35 endosomal protein sorting factor-like (942 aa).

This sequence belongs to the VPS35L family. Component of the heterotrimeric retriever complex.

Its subcellular location is the endosome. Functionally, acts as a component of the retriever complex. The retriever complex is a heterotrimeric complex related to retromer cargo-selective complex (CSC) and essential for retromer-independent retrieval and recycling of numerous cargos. In Drosophila melanogaster (Fruit fly), this protein is VPS35 endosomal protein sorting factor-like.